Here is a 406-residue protein sequence, read N- to C-terminus: Zinc finger CCCH domain-containing protein 15 homolog (406 aa).

Low complexity predominate over residues 1–11; the sequence is MPPKKAPAGPS. Positions 1 to 70 are disordered; that stretch reads MPPKKAPAGP…DKKKDEKEKK (70 aa). Positions 12–28 are enriched in basic and acidic residues; that stretch reads KKTEQKKKEKVIEDKTF. Positions 38–50 are enriched in low complexity; it reads QQKFIQQVQKQVQ. Basic and acidic residues predominate over residues 56–70; the sequence is PRQDGDKKKDEKEKK. Residues 57 to 82 adopt a coiled-coil conformation; sequence RQDGDKKKDEKEKKLADLREMASIFK. 2 C3H1-type zinc fingers span residues 94–121 and 166–203; these read DPKS…HDLS and PTTE…HALP. The disordered stretch occupies residues 336–382; that stretch reads VDGSGTIASSTRLLDQATEAAKTAAAEDGAASDDENPSSSAPANDAA. 2 stretches are compositionally biased toward low complexity: residues 352–364 and 372–382; these read ATEA…AEDG and PSSSAPANDAA.

This sequence belongs to the ZC3H15/TMA46 family.

The protein is Zinc finger CCCH domain-containing protein 15 homolog of Drosophila pseudoobscura pseudoobscura (Fruit fly).